A 332-amino-acid chain; its full sequence is Phosphate acyltransferase (332 aa).

It belongs to the PlsX family. As to quaternary structure, homodimer. Probably interacts with PlsY.

Its subcellular location is the cytoplasm. The catalysed reaction is a fatty acyl-[ACP] + phosphate = an acyl phosphate + holo-[ACP]. The protein operates within lipid metabolism; phospholipid metabolism. Functionally, catalyzes the reversible formation of acyl-phosphate (acyl-PO(4)) from acyl-[acyl-carrier-protein] (acyl-ACP). This enzyme utilizes acyl-ACP as fatty acyl donor, but not acyl-CoA. In Bacillus pumilus (strain SAFR-032), this protein is Phosphate acyltransferase.